A 333-amino-acid chain; its full sequence is Tetraacyldisaccharide 4'-kinase (333 aa).

55-62 (TAGGNGKT) is an ATP binding site.

The protein belongs to the LpxK family.

It catalyses the reaction a lipid A disaccharide + ATP = a lipid IVA + ADP + H(+). Its pathway is glycolipid biosynthesis; lipid IV(A) biosynthesis; lipid IV(A) from (3R)-3-hydroxytetradecanoyl-[acyl-carrier-protein] and UDP-N-acetyl-alpha-D-glucosamine: step 6/6. Functionally, transfers the gamma-phosphate of ATP to the 4'-position of a tetraacyldisaccharide 1-phosphate intermediate (termed DS-1-P) to form tetraacyldisaccharide 1,4'-bis-phosphate (lipid IVA). This Pectobacterium atrosepticum (strain SCRI 1043 / ATCC BAA-672) (Erwinia carotovora subsp. atroseptica) protein is Tetraacyldisaccharide 4'-kinase.